Consider the following 150-residue polypeptide: Ribosome maturation factor RimP (150 aa).

Belongs to the RimP family.

It localises to the cytoplasm. In terms of biological role, required for maturation of 30S ribosomal subunits. In Acaryochloris marina (strain MBIC 11017), this protein is Ribosome maturation factor RimP.